Here is a 314-residue protein sequence, read N- to C-terminus: 4-hydroxy-3-methylbut-2-enyl diphosphate reductase (314 aa).

Cysteine 12 serves as a coordination point for [4Fe-4S] cluster. Residues histidine 41 and histidine 74 each coordinate (2E)-4-hydroxy-3-methylbut-2-enyl diphosphate. Dimethylallyl diphosphate-binding residues include histidine 41 and histidine 74. 2 residues coordinate isopentenyl diphosphate: histidine 41 and histidine 74. Residue cysteine 96 coordinates [4Fe-4S] cluster. Histidine 124 contacts (2E)-4-hydroxy-3-methylbut-2-enyl diphosphate. A dimethylallyl diphosphate-binding site is contributed by histidine 124. Histidine 124 contacts isopentenyl diphosphate. Residue glutamate 126 is the Proton donor of the active site. Position 168 (threonine 168) interacts with (2E)-4-hydroxy-3-methylbut-2-enyl diphosphate. Residue cysteine 198 coordinates [4Fe-4S] cluster. Residues serine 226, serine 227, asparagine 228, and serine 270 each coordinate (2E)-4-hydroxy-3-methylbut-2-enyl diphosphate. Serine 226, serine 227, asparagine 228, and serine 270 together coordinate dimethylallyl diphosphate. Isopentenyl diphosphate-binding residues include serine 226, serine 227, asparagine 228, and serine 270.

It belongs to the IspH family. It depends on [4Fe-4S] cluster as a cofactor.

The enzyme catalyses isopentenyl diphosphate + 2 oxidized [2Fe-2S]-[ferredoxin] + H2O = (2E)-4-hydroxy-3-methylbut-2-enyl diphosphate + 2 reduced [2Fe-2S]-[ferredoxin] + 2 H(+). The catalysed reaction is dimethylallyl diphosphate + 2 oxidized [2Fe-2S]-[ferredoxin] + H2O = (2E)-4-hydroxy-3-methylbut-2-enyl diphosphate + 2 reduced [2Fe-2S]-[ferredoxin] + 2 H(+). It functions in the pathway isoprenoid biosynthesis; dimethylallyl diphosphate biosynthesis; dimethylallyl diphosphate from (2E)-4-hydroxy-3-methylbutenyl diphosphate: step 1/1. The protein operates within isoprenoid biosynthesis; isopentenyl diphosphate biosynthesis via DXP pathway; isopentenyl diphosphate from 1-deoxy-D-xylulose 5-phosphate: step 6/6. Functionally, catalyzes the conversion of 1-hydroxy-2-methyl-2-(E)-butenyl 4-diphosphate (HMBPP) into a mixture of isopentenyl diphosphate (IPP) and dimethylallyl diphosphate (DMAPP). Acts in the terminal step of the DOXP/MEP pathway for isoprenoid precursor biosynthesis. This Pseudomonas aeruginosa (strain ATCC 15692 / DSM 22644 / CIP 104116 / JCM 14847 / LMG 12228 / 1C / PRS 101 / PAO1) protein is 4-hydroxy-3-methylbut-2-enyl diphosphate reductase.